Reading from the N-terminus, the 220-residue chain is Ribosomal RNA large subunit methyltransferase E (220 aa).

Residues 1–10 (MSRSGKDPGK) show a composition bias toward basic and acidic residues. The disordered stretch occupies residues 1–24 (MSRSGKDPGKRVKTARKRSASSTR). The S-adenosyl-L-methionine site is built by glycine 75, tryptophan 77, aspartate 94, aspartate 110, and aspartate 134. The active-site Proton acceptor is the lysine 174.

The protein belongs to the class I-like SAM-binding methyltransferase superfamily. RNA methyltransferase RlmE family.

The protein localises to the cytoplasm. The enzyme catalyses uridine(2552) in 23S rRNA + S-adenosyl-L-methionine = 2'-O-methyluridine(2552) in 23S rRNA + S-adenosyl-L-homocysteine + H(+). Specifically methylates the uridine in position 2552 of 23S rRNA at the 2'-O position of the ribose in the fully assembled 50S ribosomal subunit. The protein is Ribosomal RNA large subunit methyltransferase E of Erythrobacter litoralis (strain HTCC2594).